The primary structure comprises 419 residues: Peptide chain release factor subunit 1 (419 aa).

The protein belongs to the eukaryotic release factor 1 family. Heterodimer of two subunits, one of which binds GTP.

The protein resides in the cytoplasm. Its function is as follows. Directs the termination of nascent peptide synthesis (translation) in response to the termination codons UAA, UAG and UGA. This chain is Peptide chain release factor subunit 1, found in Methanococcus maripaludis (strain C7 / ATCC BAA-1331).